Consider the following 61-residue polypeptide: MLNIFNLVCICIHSVLYSSSFFSAKLPEAYAFLNPIVDIMPVIPLLFFLLAFVWQAAVSFR.

Positions 1–24 (MLNIFNLVCICIHSVLYSSSFFSA) are excised as a propeptide. A helical membrane pass occupies residues 36–56 (IVDIMPVIPLLFFLLAFVWQA).

This sequence belongs to the PsbK family. In terms of assembly, PSII is composed of 1 copy each of membrane proteins PsbA, PsbB, PsbC, PsbD, PsbE, PsbF, PsbH, PsbI, PsbJ, PsbK, PsbL, PsbM, PsbT, PsbX, PsbY, PsbZ, Psb30/Ycf12, at least 3 peripheral proteins of the oxygen-evolving complex and a large number of cofactors. It forms dimeric complexes.

Its subcellular location is the plastid. The protein resides in the chloroplast thylakoid membrane. One of the components of the core complex of photosystem II (PSII). PSII is a light-driven water:plastoquinone oxidoreductase that uses light energy to abstract electrons from H(2)O, generating O(2) and a proton gradient subsequently used for ATP formation. It consists of a core antenna complex that captures photons, and an electron transfer chain that converts photonic excitation into a charge separation. This Glycine max (Soybean) protein is Photosystem II reaction center protein K.